The primary structure comprises 142 residues: MFQGASALTLDAKGRMSVPARYREALQGQAEGRVTVTKHPDGCLLLFPRPEWEVFRAKIAALPMDAHWWRRIFLGNAMDVDLDSAGRILVSPELRMAAGLEKEVMLLGMGSHFELWDSQTYIAKEQAAMAQGMPDALKNFTF.

SpoVT-AbrB domains are found at residues 5 to 51 (ASAL…PRPE) and 77 to 120 (AMDV…DSQT).

The protein belongs to the MraZ family. In terms of assembly, forms oligomers.

The protein localises to the cytoplasm. It is found in the nucleoid. The polypeptide is Transcriptional regulator MraZ (Burkholderia multivorans (strain ATCC 17616 / 249)).